Consider the following 202-residue polypeptide: Peptidyl-tRNA hydrolase (202 aa).

Y19 contributes to the tRNA binding site. Residue H24 is the Proton acceptor of the active site. Residues Y70, N72, and N118 each contribute to the tRNA site.

The protein belongs to the PTH family. In terms of assembly, monomer.

The protein resides in the cytoplasm. The enzyme catalyses an N-acyl-L-alpha-aminoacyl-tRNA + H2O = an N-acyl-L-amino acid + a tRNA + H(+). Hydrolyzes ribosome-free peptidyl-tRNAs (with 1 or more amino acids incorporated), which drop off the ribosome during protein synthesis, or as a result of ribosome stalling. In terms of biological role, catalyzes the release of premature peptidyl moieties from peptidyl-tRNA molecules trapped in stalled 50S ribosomal subunits, and thus maintains levels of free tRNAs and 50S ribosomes. The sequence is that of Peptidyl-tRNA hydrolase from Prochlorococcus marinus (strain NATL1A).